We begin with the raw amino-acid sequence, 200 residues long: NAD(P)H dehydrogenase (quinone) (200 aa).

The region spanning 4–191 is the Flavodoxin-like domain; it reads ILVLYHSLWG…TIARFQGRHV (188 aa). Residues 10 to 15 and 79 to 81 contribute to the FMN site; these read SLWGHV and TRF. Residue tryptophan 12 coordinates NAD(+). Substrate is bound at residue tryptophan 99. FMN-binding positions include 114–120 and histidine 135; that span reads STATQHG.

This sequence belongs to the WrbA family. Requires FMN as cofactor.

The catalysed reaction is a quinone + NADH + H(+) = a quinol + NAD(+). It carries out the reaction a quinone + NADPH + H(+) = a quinol + NADP(+). This Acidithiobacillus ferrooxidans (strain ATCC 53993 / BNL-5-31) (Leptospirillum ferrooxidans (ATCC 53993)) protein is NAD(P)H dehydrogenase (quinone).